The primary structure comprises 178 residues: Large ribosomal subunit protein uL6 (178 aa).

The protein belongs to the universal ribosomal protein uL6 family. In terms of assembly, part of the 50S ribosomal subunit.

This protein binds to the 23S rRNA, and is important in its secondary structure. It is located near the subunit interface in the base of the L7/L12 stalk, and near the tRNA binding site of the peptidyltransferase center. This is Large ribosomal subunit protein uL6 from Listeria innocua serovar 6a (strain ATCC BAA-680 / CLIP 11262).